A 330-amino-acid polypeptide reads, in one-letter code: Methionyl-tRNA formyltransferase (330 aa).

(6S)-5,6,7,8-tetrahydrofolate is bound at residue 112–115 (SLLP).

This sequence belongs to the Fmt family.

The catalysed reaction is L-methionyl-tRNA(fMet) + (6R)-10-formyltetrahydrofolate = N-formyl-L-methionyl-tRNA(fMet) + (6S)-5,6,7,8-tetrahydrofolate + H(+). Attaches a formyl group to the free amino group of methionyl-tRNA(fMet). The formyl group appears to play a dual role in the initiator identity of N-formylmethionyl-tRNA by promoting its recognition by IF2 and preventing the misappropriation of this tRNA by the elongation apparatus. This Synechocystis sp. (strain ATCC 27184 / PCC 6803 / Kazusa) protein is Methionyl-tRNA formyltransferase.